Consider the following 132-residue polypeptide: Putative holo-[acyl-carrier-protein] synthase (132 aa).

Residues Asp6 and Glu67 each contribute to the Mg(2+) site.

The protein belongs to the P-Pant transferase superfamily. AcpS family.

The catalysed reaction is apo-[ACP] + CoA = holo-[ACP] + adenosine 3',5'-bisphosphate + H(+). Functionally, transfers the 4'-phosphopantetheine moiety from coenzyme A to a Ser of acyl-carrier-protein. This Schizosaccharomyces pombe (strain 972 / ATCC 24843) (Fission yeast) protein is Putative holo-[acyl-carrier-protein] synthase (new8).